Here is a 166-residue protein sequence, read N- to C-terminus: NAD(P)H-quinone oxidoreductase subunit I, chloroplastic (166 aa).

4Fe-4S ferredoxin-type domains lie at 55–84 (GRIHFEFDKCIACEVCVRVCPIDLPVVDWK) and 95–124 (LNYSIDFGICIFCGNCVEYCPTNCLSMTEE). Residues Cys64, Cys67, Cys70, Cys74, Cys104, Cys107, Cys110, and Cys114 each contribute to the [4Fe-4S] cluster site.

This sequence belongs to the complex I 23 kDa subunit family. NDH is composed of at least 16 different subunits, 5 of which are encoded in the nucleus. It depends on [4Fe-4S] cluster as a cofactor.

It is found in the plastid. The protein resides in the chloroplast thylakoid membrane. The enzyme catalyses a plastoquinone + NADH + (n+1) H(+)(in) = a plastoquinol + NAD(+) + n H(+)(out). It catalyses the reaction a plastoquinone + NADPH + (n+1) H(+)(in) = a plastoquinol + NADP(+) + n H(+)(out). NDH shuttles electrons from NAD(P)H:plastoquinone, via FMN and iron-sulfur (Fe-S) centers, to quinones in the photosynthetic chain and possibly in a chloroplast respiratory chain. The immediate electron acceptor for the enzyme in this species is believed to be plastoquinone. Couples the redox reaction to proton translocation, and thus conserves the redox energy in a proton gradient. In Hofmeisteria fasciculata (Helogyne fasciculata), this protein is NAD(P)H-quinone oxidoreductase subunit I, chloroplastic.